A 294-amino-acid polypeptide reads, in one-letter code: Xyloglucan endotransglucosylase protein 34 (294 aa).

An N-terminal signal peptide occupies residues 1–22 (MAAAYPWTLFLGMLVMVSGTMG). In terms of domain architecture, GH16 spans 23–221 (AALRKPVDVA…WSKAPFIASY (199 aa)). The active-site Nucleophile is the Glu107. Residue Glu111 is the Proton donor of the active site. Xyloglucan is bound at residue Glu111. Asn115 is a glycosylation site (N-linked (GlcNAc...) asparagine). Xyloglucan-binding positions include 124-126 (QTN), 134-136 (DRE), 200-201 (DW), and Gly205. 2 disulfide bridges follow: Cys229-Cys238 and Cys275-Cys288. Arg280 contributes to the xyloglucan binding site.

The protein belongs to the glycosyl hydrolase 16 family. XTH group 1 subfamily. Post-translationally, contains at least one intrachain disulfide bond essential for its enzymatic activity. In terms of processing, N-glycosylated. Contains N-acetylglucosamine and mannose. Glycosylation is not essential for its catalytic activity. Expressed in mature gelatinous (G) cell wall layer of the tension wood fibers. Highly expressed in the outer zone of the G layer close to the secondary S2 layer. Not expressed in the mature walls of the ray cells or vessel elements (at protein level). Highest expression in both the phloem/cambium and differentiating xylem of the mature stem containing primarily secondary cell wall forming cells, in root tips and young roots. Expressed at low levels in apical bud.

It is found in the secreted. The protein localises to the cell wall. Its subcellular location is the extracellular space. It localises to the apoplast. The protein resides in the cytoplasm. The catalysed reaction is breaks a beta-(1-&gt;4) bond in the backbone of a xyloglucan and transfers the xyloglucanyl segment on to O-4 of the non-reducing terminal glucose residue of an acceptor, which can be a xyloglucan or an oligosaccharide of xyloglucan.. In terms of biological role, catalyzes xyloglucan endotransglycosylation (XET). Cleaves and religates xyloglucan polymers. Does not catalyze xyloglucan endohydrolysis (XEH). Involved in early phases of secondary (S) cell wall formation in fibers of the xylem and phloem vascular tissues of wood stems. May play a role in restructuring primary cell walls, possibly creating and reinforcing the connections between the primary and S cell wall layers. Functions in the gelatinous (G) layers of the tension wood fibers that are involved in bending of the wood stems. May play a role in G fiber shrinking by repairing broken xyloglucan cross-links between G and S2 cell wall layers via its XET activity to maintain connections between the layers. In Populus tremula x Populus tremuloides (Hybrid aspen), this protein is Xyloglucan endotransglucosylase protein 34.